A 616-amino-acid polypeptide reads, in one-letter code: FAD-linked oxidoreductase cheF (616 aa).

Positions 160 to 344 (NQGLVSPWYV…LSMTVRVEPA (185 aa)) constitute an FAD-binding PCMH-type domain.

This sequence belongs to the oxygen-dependent FAD-linked oxidoreductase family. The cofactor is FAD.

The protein operates within secondary metabolite biosynthesis. In terms of biological role, FAD-linked oxidoreductase; part of the gene cluster that mediates the biosynthesis of chaetoglobosin A which has a unique inhibitory activity against actin polymerization in mammalian cells. Chaetoglobosin A and its intermediates are involved in the morphological differentiation of C.globosum. The first step of the pathway is the synthesis of prochaetoglobosin I via condensation of one acetyl-CoA, 8 malonyl-CoA, and a L-tryptophan molecule by the PKS-NRPS hybrid synthetase cheA, followed by reduction of backbone double bond to install desired geometry by the enoyl reductase cheB. Further multiple oxidation steps performed by the cytochrome P450 monooxygenases cheE and cheG, as well as by the FAD-linked oxidoreductase cheF, lead to the formation of chaetoglobosin A. Depending on the order of action of these reductases, distinct intermediates can be identified. Within the pathway, the cytochrome P450 monooxygenase cheE catalyzes a stereospecific epoxidation on prochaetoglobosin I, cytoglobosin D, and chaetoglobosin J intermediates. The FAD-linked oxidoreductase cheF performs dehydrogenation of the C-20 hydroxyl groups in the 20-dihyrochaetoglobosin A and cytoglobosin D intermediates. Finally, the cytochrome P450 monooxygenase cheG can catalyze the stereospecific dihydroxylation of prochaetoglobosin I and prochaetoglobosin IV at C-19 and C-20, respectively. The Diels-Alderase cheD may play a role in the post-PKS-NRPS biosynthetic steps catalyzing Diels-Alder cyclization. This is FAD-linked oxidoreductase cheF from Chaetomium globosum (strain ATCC 6205 / CBS 148.51 / DSM 1962 / NBRC 6347 / NRRL 1970) (Soil fungus).